The sequence spans 576 residues: Alkaline phosphatase PhoD (576 aa).

Positions 1–32 (MNSLLHHSFLKTVFSSLAIAIVTSSLSSVTIA) are cleaved as a signal peptide. The Zn(2+) site is built by aspartate 68 and threonine 107. Threonine 107 functions as the Phosphothreonine intermediate in the catalytic mechanism. The cysteines at positions 108 and 144 are disulfide-linked. Residues asparagine 128 and 188-190 (KDR) contribute to the substrate site. Cysteine 248 and cysteine 332 are oxidised to a cystine. Zn(2+) is bound by residues aspartate 318, histidine 322, aspartate 363, histidine 364, and histidine 508. Cysteine 562 and cysteine 573 are joined by a disulfide.

Monomer. The cofactor is Zn(2+).

It carries out the reaction a phosphate monoester + H2O = an alcohol + phosphate. Its function is as follows. Alkaline phosphatase with broad substrate specificity. Has phosphatase activity towards nucleotide and sugar phosphates with a preference to nucleotide phosphates. Has no phosphodiesterase activity. The protein is Alkaline phosphatase PhoD of Zymomonas mobilis subsp. mobilis (strain ATCC 31821 / ZM4 / CP4).